Here is a 502-residue protein sequence, read N- to C-terminus: Alpha-globin transcription factor CP2 (502 aa).

Residues 61 to 300 form the Grh/CP2 DB domain; it reads ENKILPFQYV…SPGFNSSHSS (240 aa). The segment at 133–395 is DNA-binding; it reads EHQQLEGWRW…VRPRLTIYVC (263 aa). Disordered stretches follow at residues 238–268 and 294–325; these read FKPK…YQPS and FNSS…DNLL. Positions 241 to 265 are enriched in basic and acidic residues; that stretch reads KGADRKQKTDREKMEKRTPHEKEKY. S353 carries the post-translational modification Phosphoserine.

This sequence belongs to the grh/CP2 family. CP2 subfamily. In terms of assembly, binds to DNA as a dimer, isoform 3 does not bind to DNA or affect the binding of isoform 1 to DNA. Interacts with UBP1 and PIAS1, and is probably part of a complex containing TFCP2, UBP1 and PIAS1. Component of the SSP (stage selector protein) complex, which appears to be a heteromer of TFCP2 and 2 copies of NFE4. In terms of tissue distribution, ubiquitous. Expressed in brain, ovary, kidney, thymus, spleen, liver, adrenal, heart and lung (at protein level).

Its subcellular location is the nucleus. Its function is as follows. Binds a variety of cellular and viral promoters including fibrinogen, alpha-globin, SV40 and HIV-1 promoters. Activation of the alpha-globin promoter in erythroid cells is via synergistic interaction with UBP1. Functions as part of the SSP (stage selector protein) complex. Facilitates the interaction of the gamma-globin genes with enhancer elements contained in the locus control region in fetal erythroid cells. Interacts by binding to the stage selector element (SSE) in the proximal gamma-globin promoter. The sequence is that of Alpha-globin transcription factor CP2 (TFCP2) from Homo sapiens (Human).